The following is a 136-amino-acid chain: Large ribosomal subunit protein uL16 (136 aa).

Belongs to the universal ribosomal protein uL16 family. Part of the 50S ribosomal subunit.

In terms of biological role, binds 23S rRNA and is also seen to make contacts with the A and possibly P site tRNAs. In Shewanella sediminis (strain HAW-EB3), this protein is Large ribosomal subunit protein uL16.